The primary structure comprises 248 residues: Ubiquinone/menaquinone biosynthesis C-methyltransferase UbiE (248 aa).

S-adenosyl-L-methionine-binding residues include serine 68 and aspartate 92.

Belongs to the class I-like SAM-binding methyltransferase superfamily. MenG/UbiE family.

It catalyses the reaction a 2-demethylmenaquinol + S-adenosyl-L-methionine = a menaquinol + S-adenosyl-L-homocysteine + H(+). The enzyme catalyses a 2-methoxy-6-(all-trans-polyprenyl)benzene-1,4-diol + S-adenosyl-L-methionine = a 5-methoxy-2-methyl-3-(all-trans-polyprenyl)benzene-1,4-diol + S-adenosyl-L-homocysteine + H(+). It functions in the pathway quinol/quinone metabolism; menaquinone biosynthesis; menaquinol from 1,4-dihydroxy-2-naphthoate: step 2/2. Its pathway is cofactor biosynthesis; ubiquinone biosynthesis. In terms of biological role, methyltransferase required for the conversion of demethylmenaquinol (DMKH2) to menaquinol (MKH2) and the conversion of 2-polyprenyl-6-methoxy-1,4-benzoquinol (DDMQH2) to 2-polyprenyl-3-methyl-6-methoxy-1,4-benzoquinol (DMQH2). The chain is Ubiquinone/menaquinone biosynthesis C-methyltransferase UbiE from Rickettsia massiliae (strain Mtu5).